A 130-amino-acid polypeptide reads, in one-letter code: Small ribosomal subunit protein uS11 (130 aa).

It belongs to the universal ribosomal protein uS11 family. Part of the 30S ribosomal subunit. Interacts with proteins S7 and S18. Binds to IF-3.

Its function is as follows. Located on the platform of the 30S subunit, it bridges several disparate RNA helices of the 16S rRNA. Forms part of the Shine-Dalgarno cleft in the 70S ribosome. This chain is Small ribosomal subunit protein uS11, found in Thermoanaerobacter sp. (strain X514).